The primary structure comprises 635 residues: Threonine--tRNA ligase (635 aa).

A TGS domain is found at 1 to 61 (MPVIRLPDGS…TDDADLSIIT (61 aa)). Residues 242-533 (DHRKLGRQLD…LIENYAGAMP (292 aa)) form a catalytic region. Zn(2+)-binding residues include C333, H384, and H510.

Belongs to the class-II aminoacyl-tRNA synthetase family. As to quaternary structure, homodimer. Zn(2+) serves as cofactor.

It localises to the cytoplasm. It catalyses the reaction tRNA(Thr) + L-threonine + ATP = L-threonyl-tRNA(Thr) + AMP + diphosphate + H(+). Catalyzes the attachment of threonine to tRNA(Thr) in a two-step reaction: L-threonine is first activated by ATP to form Thr-AMP and then transferred to the acceptor end of tRNA(Thr). Also edits incorrectly charged L-seryl-tRNA(Thr). The sequence is that of Threonine--tRNA ligase from Methylobacillus flagellatus (strain ATCC 51484 / DSM 6875 / VKM B-1610 / KT).